A 332-amino-acid polypeptide reads, in one-letter code: Torsin-1A (332 aa).

Residues 1 to 20 (MKLGRAVLGLLLLAPSVVQA) form the signal peptide. Residues 91–251 (KPKKPLTLSL…VSVFNNKNSG (161 aa)) are interaction with SNAPIN. Residue 102-109 (GWTGTGKN) coordinates ATP. N-linked (GlcNAc...) (high mannose) asparagine glycans are attached at residues Asn143 and Asn158. Positions 251–332 (GFWHSSLIDR…FTKLDYYYDD (82 aa)) are interaction with KLC1. Residues 312–332 (RVFSDKGCKTVFTKLDYYYDD) form an interaction with SYNE3 region.

This sequence belongs to the ClpA/ClpB family. Torsin subfamily. Homohexamer. Interacts with TOR1B; the interaction may be specific of neural tissues. Interacts (ATP-bound) with TOR1AIP1 and TOR1AIP2; the interactions induce ATPase activity. Interacts with KLHL14; preferentially when ATP-free. Interacts with KLC1 (via TPR repeats); the interaction associates TOR1A with the kinesin oligomeric complex. Interacts with COPS4; the interaction associates TOR1A with the CSN complex. Interacts with SNAPIN; the interaction is direct and associates SNAPIN with the CSN complex. Interacts with STON2. Interacts (ATP-bound) with SYNE3 (via KASH domain); the interaction is required for SYNE3 nuclear envelope localization. Interacts with VIM; the interaction associates TOR1A with the cytoskeleton. Interacts with PLEC. Interacts (ATP-bound) with SLC6A3; regulates SLC6A3 transport to the plasma membrane. Post-translationally, N-glycosylated. In terms of tissue distribution, widely expressed. Highest levels in kidney and liver. In the brain, high levels found in the dopaminergic neurons of the substantia nigra pars compacta, as well as in the neocortex, hippocampus and cerebellum. Also highly expressed in the spinal cord.

The protein localises to the endoplasmic reticulum lumen. The protein resides in the nucleus membrane. It is found in the cell projection. Its subcellular location is the growth cone. It localises to the cytoplasmic vesicle membrane. The protein localises to the cytoplasmic vesicle. The protein resides in the secretory vesicle. It is found in the synaptic vesicle. Its subcellular location is the cytoplasm. It localises to the cytoskeleton. It carries out the reaction ATP + H2O = ADP + phosphate + H(+). Protein with chaperone functions important for the control of protein folding, processing, stability and localization as well as for the reduction of misfolded protein aggregates. Involved in the regulation of synaptic vesicle recycling, controls STON2 protein stability in collaboration with the COP9 signalosome complex (CSN). In the nucleus, may link the cytoskeleton with the nuclear envelope, this mechanism seems to be crucial for the control of nuclear polarity, cell movement and, specifically in neurons, nuclear envelope integrity. Participates in the cellular trafficking and may regulate the subcellular location of multipass membrane proteins such as the dopamine transporter SLC6A3, leading to the modulation of dopamine neurotransmission. In the endoplasmic reticulum, plays a role in the quality control of protein folding by increasing clearance of misfolded proteins such as SGCE variants or holding them in an intermediate state for proper refolding. May have a redundant function with TOR1B in non-neural tissues. The chain is Torsin-1A (TOR1A) from Homo sapiens (Human).